The chain runs to 619 residues: UvrABC system protein C (619 aa).

The region spanning 20–98 (TAPGVYRMYA…IKSLSPRYNV (79 aa)) is the GIY-YIG domain. The region spanning 207-242 (DQLGEEIMHSMQQASEALEFERAARLRDLLSSLRSM) is the UVR domain.

It belongs to the UvrC family. As to quaternary structure, interacts with UvrB in an incision complex.

It localises to the cytoplasm. Functionally, the UvrABC repair system catalyzes the recognition and processing of DNA lesions. UvrC both incises the 5' and 3' sides of the lesion. The N-terminal half is responsible for the 3' incision and the C-terminal half is responsible for the 5' incision. The protein is UvrABC system protein C of Xanthomonas axonopodis pv. citri (strain 306).